A 464-amino-acid chain; its full sequence is Soluble pyridine nucleotide transhydrogenase (464 aa).

D35–C44 lines the FAD pocket.

This sequence belongs to the class-I pyridine nucleotide-disulfide oxidoreductase family. FAD is required as a cofactor.

Its subcellular location is the cytoplasm. It carries out the reaction NAD(+) + NADPH = NADH + NADP(+). Functionally, conversion of NADPH, generated by peripheral catabolic pathways, to NADH, which can enter the respiratory chain for energy generation. The sequence is that of Soluble pyridine nucleotide transhydrogenase from Pseudomonas putida (strain GB-1).